Here is an 858-residue protein sequence, read N- to C-terminus: Bifunctional uridylyltransferase/uridylyl-removing enzyme (858 aa).

A uridylyltransferase region spans residues 1–324; the sequence is MSAHAAPSPE…PATSGITRVL (324 aa). Residues 325–681 form a uridylyl-removing region; it reads SADRFVEKQG…ARPSPIGDAL (357 aa). Residues 443 to 565 enclose the HD domain; it reads VDQHILMVLR…VGNERYLTAL (123 aa). ACT domains follow at residues 682–763 and 790–858; these read QVLV…PSKG and ILSV…AIAV.

The protein belongs to the GlnD family. It depends on Mg(2+) as a cofactor.

It catalyses the reaction [protein-PII]-L-tyrosine + UTP = [protein-PII]-uridylyl-L-tyrosine + diphosphate. The catalysed reaction is [protein-PII]-uridylyl-L-tyrosine + H2O = [protein-PII]-L-tyrosine + UMP + H(+). With respect to regulation, uridylyltransferase (UTase) activity is inhibited by glutamine, while glutamine activates uridylyl-removing (UR) activity. Its function is as follows. Modifies, by uridylylation and deuridylylation, the PII regulatory proteins (GlnB and homologs), in response to the nitrogen status of the cell that GlnD senses through the glutamine level. Under low glutamine levels, catalyzes the conversion of the PII proteins and UTP to PII-UMP and PPi, while under higher glutamine levels, GlnD hydrolyzes PII-UMP to PII and UMP (deuridylylation). Thus, controls uridylylation state and activity of the PII proteins, and plays an important role in the regulation of nitrogen assimilation and metabolism. In Burkholderia orbicola (strain MC0-3), this protein is Bifunctional uridylyltransferase/uridylyl-removing enzyme.